We begin with the raw amino-acid sequence, 150 residues long: CCAAT/enhancer-binding protein gamma (150 aa).

K3 is covalently cross-linked (Glycyl lysine isopeptide (Lys-Gly) (interchain with G-Cter in SUMO2)). The segment at 27 to 94 is disordered; that stretch reads GLQQVPQLVP…QKAQDTLQRV (68 aa). Residues 28 to 37 are compositionally biased toward low complexity; sequence LQQVPQLVPA. Positions 56–72 are enriched in basic and acidic residues; that stretch reads SPMDRNSDEYRQRRERN. The 64-residue stretch at 62–125 folds into the bZIP domain; it reads SDEYRQRRER…SVLKDLFLEH (64 aa). Residues 66 to 93 form a basic motif region; the sequence is RQRRERNNMAVKKSRLKSKQKAQDTLQR. Positions 97–118 are leucine-zipper; that stretch reads LKEENERLEAKIKLLTKELSVL.

This sequence belongs to the bZIP family. C/EBP subfamily. In terms of assembly, binds DNA as a dimer and can form stable heterodimers with CEBPA and CEBPB. Interacts with ZNF638; this interaction increases transcriptional activation.

It localises to the nucleus. Its function is as follows. Transcription factor that binds to the promoter and the enhancer regions of target genes. Binds to the promoter and the enhancer of the alpha-1-fetoprotein gene. Binds to the enhancer element PRE-I (positive regulatory element-I) of the IL-4 gene. Binds to the promoter and the enhancer of the immunoglobulin heavy chain. Binds to GPE1, a cis-acting element in the G-CSF gene promoter. The protein is CCAAT/enhancer-binding protein gamma (Cebpg) of Rattus norvegicus (Rat).